A 312-amino-acid polypeptide reads, in one-letter code: Glyoxylate/hydroxypyruvate reductase A (312 aa).

Residue R227 is part of the active site. The active-site Proton donor is the H275.

The protein belongs to the D-isomer specific 2-hydroxyacid dehydrogenase family. GhrA subfamily.

It is found in the cytoplasm. The enzyme catalyses glycolate + NADP(+) = glyoxylate + NADPH + H(+). It catalyses the reaction (R)-glycerate + NAD(+) = 3-hydroxypyruvate + NADH + H(+). The catalysed reaction is (R)-glycerate + NADP(+) = 3-hydroxypyruvate + NADPH + H(+). Functionally, catalyzes the NADPH-dependent reduction of glyoxylate and hydroxypyruvate into glycolate and glycerate, respectively. The protein is Glyoxylate/hydroxypyruvate reductase A of Escherichia coli O127:H6 (strain E2348/69 / EPEC).